We begin with the raw amino-acid sequence, 388 residues long: Protein DVU_0534 (388 aa).

10 consecutive transmembrane segments (helical) span residues 10-31, 57-78, 89-106, 130-144, 166-191, 199-222, 254-265, 291-306, 316-328, and 354-368; these read LMTP…LTVL, LLCG…YLFG, AITT…ALNY, EVGL…VLFV, LTLV…LFLI, LWYS…SMVI, AASFVLAGYFMI, MLGF…ALGV, FASV…IVMN, and IGIS…ITVY.

The protein belongs to the NrfD family.

It localises to the cell membrane. HMWC (high-molecular-weight cytochrome c), ORF2, ORF3, ORF4, ORF5 and ORF6 in the HMC operon form a transmembrane protein complex that allows electron flow from the periplasmic hydrogenase to the cytoplasmic enzymes that catalyze reduction of sulfates. This is Protein DVU_0534 from Nitratidesulfovibrio vulgaris (strain ATCC 29579 / DSM 644 / CCUG 34227 / NCIMB 8303 / VKM B-1760 / Hildenborough) (Desulfovibrio vulgaris).